The chain runs to 250 residues: 5-oxoprolinase subunit A (250 aa).

The protein belongs to the LamB/PxpA family. As to quaternary structure, forms a complex composed of PxpA, PxpB and PxpC.

It catalyses the reaction 5-oxo-L-proline + ATP + 2 H2O = L-glutamate + ADP + phosphate + H(+). Catalyzes the cleavage of 5-oxoproline to form L-glutamate coupled to the hydrolysis of ATP to ADP and inorganic phosphate. The protein is 5-oxoprolinase subunit A of Staphylococcus aureus (strain Mu3 / ATCC 700698).